The chain runs to 297 residues: tRNA pseudouridine synthase B (297 aa).

Asp-44 acts as the Nucleophile in catalysis.

This sequence belongs to the pseudouridine synthase TruB family. Type 1 subfamily.

It carries out the reaction uridine(55) in tRNA = pseudouridine(55) in tRNA. In terms of biological role, responsible for synthesis of pseudouridine from uracil-55 in the psi GC loop of transfer RNAs. The chain is tRNA pseudouridine synthase B from Corynebacterium efficiens (strain DSM 44549 / YS-314 / AJ 12310 / JCM 11189 / NBRC 100395).